A 76-amino-acid polypeptide reads, in one-letter code: RNA-binding protein KhpA (76 aa).

The KH domain occupies 29–76 (SLTYKLSVSKEDMGRVIGKQGRIAKAIRTLVYAVGSKNDKKIRLEIIE).

This sequence belongs to the KhpA RNA-binding protein family. As to quaternary structure, forms a complex with KhpB.

The protein resides in the cytoplasm. Its function is as follows. A probable RNA chaperone. Forms a complex with KhpB which binds to cellular RNA and controls its expression. Plays a role in peptidoglycan (PG) homeostasis and cell length regulation. This Listeria innocua serovar 6a (strain ATCC BAA-680 / CLIP 11262) protein is RNA-binding protein KhpA.